Here is a 388-residue protein sequence, read N- to C-terminus: Succinate--CoA ligase [ADP-forming] subunit beta (388 aa).

One can recognise an ATP-grasp domain in the interval 9-244 (KGILSGFDVR…PHEYSEEELE (236 aa)). ATP is bound by residues Lys-46, 53-55 (GRG), Glu-99, Val-102, and Glu-107. Mg(2+) contacts are provided by Asn-199 and Asp-213. Substrate-binding positions include Asn-264 and 320 to 322 (GIM).

This sequence belongs to the succinate/malate CoA ligase beta subunit family. As to quaternary structure, heterotetramer of two alpha and two beta subunits. Requires Mg(2+) as cofactor.

It catalyses the reaction succinate + ATP + CoA = succinyl-CoA + ADP + phosphate. It carries out the reaction GTP + succinate + CoA = succinyl-CoA + GDP + phosphate. It functions in the pathway carbohydrate metabolism; tricarboxylic acid cycle; succinate from succinyl-CoA (ligase route): step 1/1. Functionally, succinyl-CoA synthetase functions in the citric acid cycle (TCA), coupling the hydrolysis of succinyl-CoA to the synthesis of either ATP or GTP and thus represents the only step of substrate-level phosphorylation in the TCA. The beta subunit provides nucleotide specificity of the enzyme and binds the substrate succinate, while the binding sites for coenzyme A and phosphate are found in the alpha subunit. This Anaplasma phagocytophilum (strain HZ) protein is Succinate--CoA ligase [ADP-forming] subunit beta.